The following is a 137-amino-acid chain: Large ribosomal subunit protein uL16 (137 aa).

Belongs to the universal ribosomal protein uL16 family. As to quaternary structure, part of the 50S ribosomal subunit.

Its function is as follows. Binds 23S rRNA and is also seen to make contacts with the A and possibly P site tRNAs. The sequence is that of Large ribosomal subunit protein uL16 from Marinomonas sp. (strain MWYL1).